The following is a 352-amino-acid chain: Iron-sulfur cluster carrier protein (352 aa).

114 to 121 (GKGGVGKS) contributes to the ATP binding site.

It belongs to the Mrp/NBP35 ATP-binding proteins family. As to quaternary structure, homodimer. Interacts with BrxC.

Functionally, binds and transfers iron-sulfur (Fe-S) clusters to target apoproteins. Can hydrolyze ATP. In terms of biological role, negatively regulates the expression of hpr/scoC. The effect on hpr/scoC may be indirect. The sequence is that of Iron-sulfur cluster carrier protein (salA) from Bacillus subtilis (strain 168).